A 320-amino-acid chain; its full sequence is Methionyl-tRNA formyltransferase (320 aa).

Ser112–Pro115 provides a ligand contact to (6S)-5,6,7,8-tetrahydrofolate.

Belongs to the Fmt family.

The catalysed reaction is L-methionyl-tRNA(fMet) + (6R)-10-formyltetrahydrofolate = N-formyl-L-methionyl-tRNA(fMet) + (6S)-5,6,7,8-tetrahydrofolate + H(+). In terms of biological role, attaches a formyl group to the free amino group of methionyl-tRNA(fMet). The formyl group appears to play a dual role in the initiator identity of N-formylmethionyl-tRNA by promoting its recognition by IF2 and preventing the misappropriation of this tRNA by the elongation apparatus. The sequence is that of Methionyl-tRNA formyltransferase from Allorhizobium ampelinum (strain ATCC BAA-846 / DSM 112012 / S4) (Agrobacterium vitis (strain S4)).